A 171-amino-acid chain; its full sequence is Adenine phosphoribosyltransferase (171 aa).

This sequence belongs to the purine/pyrimidine phosphoribosyltransferase family. In terms of assembly, homodimer.

It is found in the cytoplasm. The enzyme catalyses AMP + diphosphate = 5-phospho-alpha-D-ribose 1-diphosphate + adenine. It participates in purine metabolism; AMP biosynthesis via salvage pathway; AMP from adenine: step 1/1. In terms of biological role, catalyzes a salvage reaction resulting in the formation of AMP, that is energically less costly than de novo synthesis. In Mycoplasma mobile (strain ATCC 43663 / 163K / NCTC 11711) (Mesomycoplasma mobile), this protein is Adenine phosphoribosyltransferase.